We begin with the raw amino-acid sequence, 520 residues long: Na(+)/H(+) antiporter NhaB (520 aa).

The next 12 membrane-spanning stretches (helical) occupy residues 27-49 (GFLI…LLVI), 62-82 (YPLL…MTSA), 97-117 (LLLI…LLIF), 120-140 (LLLG…AAAF), 144-164 (FLDA…FYGI), 202-222 (LMMH…VGEP), 238-258 (FLLR…VTCI), 303-323 (GLIG…VGLI), 348-368 (TEAL…AVII), 391-411 (LFYL…VGTV), 447-467 (ATPN…APLI), and 475-495 (VWMA…CVQF).

It belongs to the NhaB Na(+)/H(+) (TC 2.A.34) antiporter family.

The protein resides in the cell inner membrane. The enzyme catalyses 2 Na(+)(in) + 3 H(+)(out) = 2 Na(+)(out) + 3 H(+)(in). In terms of biological role, na(+)/H(+) antiporter that extrudes sodium in exchange for external protons. This is Na(+)/H(+) antiporter NhaB from Cronobacter sakazakii (strain ATCC BAA-894) (Enterobacter sakazakii).